Consider the following 146-residue polypeptide: Gastrin-releasing peptide (146 aa).

Residues 1-23 (MRGSELSLLLLALVLCQAPRGPA) form the signal peptide. Residue methionine 52 is modified to Methionine amide. Residues 56–146 (STDESPSLYA…VLKEKGGTAS (91 aa)) constitute a propeptide that is removed on maturation. Residues 94–112 (AAGNQSHQPPQHPPLSLQP) are compositionally biased toward low complexity. Residues 94–121 (AAGNQSHQPPQHPPLSLQPTWDPEDGSY) are disordered.

This sequence belongs to the bombesin/neuromedin-B/ranatensin family. In terms of tissue distribution, detected in peptidergic dorsal root ganglion neurons (at protein level). Expressed in several dozen neurons throughout the dorsal retrotrapezoid nucleus/parafacial respiratory group (RTN/pFRG) as well as in scattered cells in the nucleus tractus solitarius and parabrachial nucleus (at protein level). Within the RTN/pFRG, expressed in neuronal subpopulations distinct from those expressing Nmb (at protein level). Expressed in L6 corticothalamic neurons (at protein level). Strongly expressed in several input areas of the auditory cortex including the lateral amygdala, contralateral auditory cortex, temporal association area, perirhinal cortex and auditory thalamic nuclei (at protein level). Detected in the suprachiasmatic nucleus in the hypothalamus. Detected in a subset of glutamatergic cells in the cortex. Highly expressed both in the lateral nucleus of the amygdala, and in regions sending synaptic projections to the lateral nucleus.

Its subcellular location is the secreted. The protein resides in the cytoplasmic vesicle. The protein localises to the secretory vesicle lumen. It localises to the cell projection. It is found in the neuron projection. Functionally, stimulates the release of gastrin and other gastrointestinal hormones. Contributes to the perception of prurient stimuli and to the transmission of itch signals in the spinal cord that promote scratching behavior. Contributes primarily to nonhistaminergic itch sensation. In one study, shown to act in the amygdala as part of an inhibitory network which inhibits memory specifically related to learned fear. In another study, shown to act on vasoactive intestinal peptide (VIP)-expressing cells in the auditory cortex, most likely via extrasynaptic diffusion from local and long-range sources, to mediate disinhibition of glutamatergic cells via VIP cell-specific GRPR signaling which leads to enhanced auditory fear memories. Contributes to the regulation of food intake. Inhibits voltage-gated sodium channels but enhances voltage-gated potassium channels in hippocampal neurons. Contributes to the induction of sighing by acting directly on the pre-Botzinger complex, a cluster of several thousand neurons in the ventrolateral medulla responsible for inspiration during respiratory activity. Induces an itch response through activation of receptors present on mast cells, triggering mast cell degranulation. This Mus musculus (Mouse) protein is Gastrin-releasing peptide (Grp).